A 427-amino-acid polypeptide reads, in one-letter code: MLTKAETANDIAAVMAEVGRKARAAAAPLSIATTEQKNRALIAAADAMLEARGDILEANKLDLANAEKNGMAASFVDRLALDDGRISAIADGIRAIAALPDPVGEVIAEWDRPNGLHIERVRTPLGVIGVIYESRPNVTADAGALCLKAGNAVILRGGSDSAHSSAAIHKALVRGLEAAGLPADAIQIVPVTDRAAVGEMLKGLDGAIDVIVPRGGKSLVARVQSEARVPVFAHLEGICHLYIDKSADLDMARKIAVDAKMRRTGICGAAETLLVDRAAAAMHLVPILEDLAAKSCEIRGSADVLALYPAAKPATEEDWSTEYLDAIISVALVDGISGAIEHINRYSSHHTEAVVAEDAAAVARFFNEIDSAILLHNASTQFADGGEFGMGAEIGIATGKMHARGPVGVEQLTSFKYRVRGDGQIRG.

The protein belongs to the gamma-glutamyl phosphate reductase family.

It localises to the cytoplasm. It carries out the reaction L-glutamate 5-semialdehyde + phosphate + NADP(+) = L-glutamyl 5-phosphate + NADPH + H(+). Its pathway is amino-acid biosynthesis; L-proline biosynthesis; L-glutamate 5-semialdehyde from L-glutamate: step 2/2. Functionally, catalyzes the NADPH-dependent reduction of L-glutamate 5-phosphate into L-glutamate 5-semialdehyde and phosphate. The product spontaneously undergoes cyclization to form 1-pyrroline-5-carboxylate. The sequence is that of Gamma-glutamyl phosphate reductase from Brucella anthropi (strain ATCC 49188 / DSM 6882 / CCUG 24695 / JCM 21032 / LMG 3331 / NBRC 15819 / NCTC 12168 / Alc 37) (Ochrobactrum anthropi).